A 196-amino-acid polypeptide reads, in one-letter code: DnaA initiator-associating protein DiaA (196 aa).

Residues 34–196 (LVQSLLNGNK…DSTLFPHQDE (163 aa)) form the SIS domain.

The protein belongs to the SIS family. DiaA subfamily. Homotetramer; dimer of dimers.

Its function is as follows. Required for the timely initiation of chromosomal replication via direct interactions with the DnaA initiator protein. This is DnaA initiator-associating protein DiaA from Serratia proteamaculans (strain 568).